The primary structure comprises 126 residues: Adenosine 5'-monophosphoramidase HINT1 (126 aa).

Alanine 2 bears the N-acetylalanine mark. The region spanning 18–126 (IFGKIIRKEI…GGRQMNWPPG (109 aa)) is the HIT domain. 2 positions are modified to N6-acetyllysine: lysine 21 and lysine 30. 43–44 (DI) lines the AMP pocket. 2 positions are modified to phosphoserine: serine 45 and serine 72. AMP-binding positions include asparagine 99, 105-107 (GQS), and 112-114 (HLH). The Histidine triad motif motif lies at 110–114 (HVHLH). Residue histidine 112 is the Tele-AMP-histidine intermediate of the active site.

This sequence belongs to the HINT family. Homodimer. Interacts with CDK7. Interacts with RUVBL1 and RUVBL2 and is associated with the LEF1/TCF1-CTNNB1 complex and with a KAT5 histone acetyltransferase complex. Identified in a complex with MITF and CTNNB1. Interacts with CDC34 and RBX1, and is part of a SCF (SKP2-CUL1-F-box protein) E3 ubiquitin-protein ligase complex. Interacts with SUMO1, SUMO2 and RGS17. Interacts with the Ten-1 ICD form of TENM1. Interacts with CALM1; interaction increases in the presence of calcium ions. As to expression, widely expressed.

The protein resides in the cytoplasm. It is found in the nucleus. The enzyme catalyses adenosine 5'-phosphoramidate + H2O = AMP + NH4(+). In terms of biological role, exhibits adenosine 5'-monophosphoramidase activity, hydrolyzing purine nucleotide phosphoramidates with a single phosphate group such as adenosine 5'monophosphoramidate (AMP-NH2) to yield AMP and NH2. Hydrolyzes adenosine 5'monophosphomorpholidate (AMP-morpholidate) and guanosine 5'monophosphomorpholidate (GMP-morpholidate). Hydrolyzes lysyl-AMP (AMP-N-epsilon-(N-alpha-acetyl lysine methyl ester)) generated by lysine tRNA ligase, as well as Met-AMP, His-AMP and Asp-AMP, lysyl-GMP (GMP-N-epsilon-(N-alpha-acetyl lysine methyl ester)) and AMP-N-alanine methyl ester. Can also convert adenosine 5'-O-phosphorothioate and guanosine 5'-O-phosphorothioate to the corresponding nucleoside 5'-O-phosphates with concomitant release of hydrogen sulfide. In addition, functions as a scaffolding protein that modulates transcriptional activation by the LEF1/TCF1-CTNNB1 complex and by the complex formed with MITF and CTNNB1. Modulates p53/TP53 levels and p53/TP53-mediated apoptosis. Modulates proteasomal degradation of target proteins by the SCF (SKP2-CUL1-F-box protein) E3 ubiquitin-protein ligase complex. Also exhibits SUMO-specific isopeptidase activity, deconjugating SUMO1 from RANGAP1 and RGS17. The polypeptide is Adenosine 5'-monophosphoramidase HINT1 (HINT1) (Bos taurus (Bovine)).